The sequence spans 143 residues: Transcriptional regulator MraZ (143 aa).

SpoVT-AbrB domains lie at 5 to 47 (EYSH…PMAV) and 76 to 119 (ALEA…SAEN).

This sequence belongs to the MraZ family. As to quaternary structure, forms oligomers.

Its subcellular location is the cytoplasm. The protein localises to the nucleoid. This chain is Transcriptional regulator MraZ, found in Leuconostoc mesenteroides subsp. mesenteroides (strain ATCC 8293 / DSM 20343 / BCRC 11652 / CCM 1803 / JCM 6124 / NCDO 523 / NBRC 100496 / NCIMB 8023 / NCTC 12954 / NRRL B-1118 / 37Y).